The following is a 281-amino-acid chain: MELNHEYGIMNTTPNIHAMIVAAGRGSRFGASIPKQYTLLQGQTLLQHSVARLAESAYIYQCLLVVAADDSTAQTLSFALPIYYAVGGAERWQSVQAGVEAMINAGADEADLVVIHDAARPAVPTHDIDAVIQAAMLEPYGAILATPVADTLKQSYIAANILSMPVHEAVLPHQHTQPELTINESDRDALHAYAQKTIDRSHMWQAQTPQVFRLGPLQQVLNYVAEHNLAITDEASAFEHLELPIRLVMGSRQNIKLTYPDDSILLTAILMAQFSSIVEIL.

The protein belongs to the IspD/TarI cytidylyltransferase family. IspD subfamily.

The enzyme catalyses 2-C-methyl-D-erythritol 4-phosphate + CTP + H(+) = 4-CDP-2-C-methyl-D-erythritol + diphosphate. It participates in isoprenoid biosynthesis; isopentenyl diphosphate biosynthesis via DXP pathway; isopentenyl diphosphate from 1-deoxy-D-xylulose 5-phosphate: step 2/6. Functionally, catalyzes the formation of 4-diphosphocytidyl-2-C-methyl-D-erythritol from CTP and 2-C-methyl-D-erythritol 4-phosphate (MEP). This chain is 2-C-methyl-D-erythritol 4-phosphate cytidylyltransferase, found in Psychrobacter arcticus (strain DSM 17307 / VKM B-2377 / 273-4).